Consider the following 124-residue polypeptide: Fluoride-specific ion channel FluC (124 aa).

4 consecutive transmembrane segments (helical) span residues 4-24, 35-55, 60-80, and 102-122; these read LLLVALGGSIGAVFRYLISIF, FGTLLVNVLGSFLMGVIYALG, ISPEFKALIGIGLLGALTTFS, and VVLNLSLCLFMVYLGQQLVFS. 2 residues coordinate Na(+): glycine 74 and threonine 77.

The protein belongs to the fluoride channel Fluc/FEX (TC 1.A.43) family.

The protein localises to the cell inner membrane. It catalyses the reaction fluoride(in) = fluoride(out). With respect to regulation, na(+) is not transported, but it plays an essential structural role and its presence is essential for fluoride channel function. In terms of biological role, fluoride-specific ion channel. Important for reducing fluoride concentration in the cell, thus reducing its toxicity. In Shewanella baltica (strain OS223), this protein is Fluoride-specific ion channel FluC.